We begin with the raw amino-acid sequence, 122 residues long: Large ribosomal subunit protein bL12 (122 aa).

Belongs to the bacterial ribosomal protein bL12 family. In terms of assembly, homodimer. Part of the ribosomal stalk of the 50S ribosomal subunit. Forms a multimeric L10(L12)X complex, where L10 forms an elongated spine to which 2 to 4 L12 dimers bind in a sequential fashion. Binds GTP-bound translation factors.

Forms part of the ribosomal stalk which helps the ribosome interact with GTP-bound translation factors. Is thus essential for accurate translation. This is Large ribosomal subunit protein bL12 from Stenotrophomonas maltophilia (strain K279a).